A 442-amino-acid chain; its full sequence is F-box/FBD/LRR-repeat protein At2g26030 (442 aa).

Residues C3–K49 form the F-box domain. LRR repeat units lie at residues C128–D160, W162–R187, P188–F214, Y234–S260, K278–S309, and Q324–F352. An FBD domain is found at P358–L410.

In Arabidopsis thaliana (Mouse-ear cress), this protein is F-box/FBD/LRR-repeat protein At2g26030.